The sequence spans 589 residues: 3-(3-hydroxy-phenyl)propionate/3-hydroxycinnamic acid hydroxylase (589 aa).

FAD contacts are provided by residues D15 to K44 and F283 to D293.

Belongs to the PheA/TfdB FAD monooxygenase family. FAD is required as a cofactor.

It catalyses the reaction 3-(3-hydroxyphenyl)propanoate + NADH + O2 + H(+) = 3-(2,3-dihydroxyphenyl)propanoate + NAD(+) + H2O. The enzyme catalyses (2E)-3-(3-hydroxyphenyl)prop-2-enoate + NADH + O2 + H(+) = (2E)-3-(2,3-dihydroxyphenyl)prop-2-enoate + NAD(+) + H2O. It participates in aromatic compound metabolism; 3-phenylpropanoate degradation. Catalyzes the insertion of one atom of molecular oxygen into position 2 of the phenyl ring of 3-(3-hydroxyphenyl)propionate (3-HPP) and hydroxycinnamic acid (3HCI). This is 3-(3-hydroxy-phenyl)propionate/3-hydroxycinnamic acid hydroxylase from Comamonas testosteroni (Pseudomonas testosteroni).